A 413-amino-acid chain; its full sequence is S-adenosylmethionine synthase (413 aa).

Residue histidine 15 participates in ATP binding. Aspartate 17 is a binding site for Mg(2+). Glutamate 43 provides a ligand contact to K(+). Glutamate 56 and glutamine 100 together coordinate L-methionine. A flexible loop region spans residues 100–110; sequence QSPDISQGVNE. Residues 171–173, 248–249, aspartate 257, 263–264, alanine 280, and lysine 284 each bind ATP; these read DGK, KF, and RK. Aspartate 257 serves as a coordination point for L-methionine. Residue lysine 288 participates in L-methionine binding.

This sequence belongs to the AdoMet synthase family. As to quaternary structure, homotetramer; dimer of dimers. Mg(2+) serves as cofactor. Requires K(+) as cofactor.

The protein resides in the cytoplasm. It catalyses the reaction L-methionine + ATP + H2O = S-adenosyl-L-methionine + phosphate + diphosphate. It functions in the pathway amino-acid biosynthesis; S-adenosyl-L-methionine biosynthesis; S-adenosyl-L-methionine from L-methionine: step 1/1. In terms of biological role, catalyzes the formation of S-adenosylmethionine (AdoMet) from methionine and ATP. The overall synthetic reaction is composed of two sequential steps, AdoMet formation and the subsequent tripolyphosphate hydrolysis which occurs prior to release of AdoMet from the enzyme. The protein is S-adenosylmethionine synthase of Prochlorococcus marinus (strain MIT 9215).